The following is a 122-amino-acid chain: MIQPQTYLNVADNSGARKLMCIQILGASNRKYAHIGDIIIAVVKEAIPNMPLKKSEVVRAVVVRTCKELKRKNGTIIQFDDNAAVIINQEGNPKGTRVFGPVARELRESNFTKIVSLAPEVL.

It belongs to the universal ribosomal protein uL14 family. As to quaternary structure, part of the 50S ribosomal subunit.

The protein resides in the plastid. Its subcellular location is the chloroplast. In terms of biological role, binds to 23S rRNA. This Physcomitrium patens (Spreading-leaved earth moss) protein is Large ribosomal subunit protein uL14c.